A 183-amino-acid polypeptide reads, in one-letter code: Glutathione-regulated potassium-efflux system ancillary protein KefG (183 aa).

Belongs to the NAD(P)H dehydrogenase (quinone) family. KefG subfamily. In terms of assembly, interacts with KefB.

It is found in the cell inner membrane. The enzyme catalyses a quinone + NADH + H(+) = a quinol + NAD(+). The catalysed reaction is a quinone + NADPH + H(+) = a quinol + NADP(+). Functionally, regulatory subunit of a potassium efflux system that confers protection against electrophiles. Required for full activity of KefB. This Salmonella gallinarum (strain 287/91 / NCTC 13346) protein is Glutathione-regulated potassium-efflux system ancillary protein KefG.